A 503-amino-acid polypeptide reads, in one-letter code: uncharacterized protein (503 aa).

Disordered stretches follow at residues Met1–Thr26 and Asp132–Met156. Positions Ala16–Thr26 are enriched in low complexity. Residues Thr147 to Met156 show a composition bias toward polar residues.

This is an uncharacterized protein from Caenorhabditis elegans.